Reading from the N-terminus, the 524-residue chain is Cytochrome P450 6k1 (524 aa).

Cysteine 464 provides a ligand contact to heme.

The protein belongs to the cytochrome P450 family. It depends on heme as a cofactor.

It is found in the endoplasmic reticulum membrane. The protein resides in the microsome membrane. The protein is Cytochrome P450 6k1 (CYP6K1) of Blattella germanica (German cockroach).